We begin with the raw amino-acid sequence, 213 residues long: Protein HSH49 (213 aa).

2 consecutive RRM domains span residues 9-88 (NTVY…QVTN) and 108-185 (AKLF…YAFK).

As to quaternary structure, interacts with RDS3.

The protein localises to the nucleus. In terms of biological role, possible SF3b-like factor. This is Protein HSH49 (HSH49) from Saccharomyces cerevisiae (strain ATCC 204508 / S288c) (Baker's yeast).